Reading from the N-terminus, the 339-residue chain is Quinolinate synthase (339 aa).

The iminosuccinate site is built by H63 and S81. C126 provides a ligand contact to [4Fe-4S] cluster. Iminosuccinate is bound by residues 152 to 154 (YVN) and S169. Residue C211 coordinates [4Fe-4S] cluster. Iminosuccinate contacts are provided by residues 237–239 (HPE) and T254. C297 is a binding site for [4Fe-4S] cluster.

The protein belongs to the quinolinate synthase family. Type 2 subfamily. The cofactor is [4Fe-4S] cluster.

It localises to the cytoplasm. The catalysed reaction is iminosuccinate + dihydroxyacetone phosphate = quinolinate + phosphate + 2 H2O + H(+). Its pathway is cofactor biosynthesis; NAD(+) biosynthesis; quinolinate from iminoaspartate: step 1/1. In terms of biological role, catalyzes the condensation of iminoaspartate with dihydroxyacetone phosphate to form quinolinate. The protein is Quinolinate synthase of Xylella fastidiosa (strain 9a5c).